A 122-amino-acid polypeptide reads, in one-letter code: UPF0102 protein VIBHAR_00890 (122 aa).

This sequence belongs to the UPF0102 family.

This chain is UPF0102 protein VIBHAR_00890, found in Vibrio campbellii (strain ATCC BAA-1116).